Here is a 344-residue protein sequence, read N- to C-terminus: Ferrochelatase (344 aa).

The Fe cation site is built by histidine 214 and glutamate 295.

Belongs to the ferrochelatase family.

It localises to the cytoplasm. It catalyses the reaction heme b + 2 H(+) = protoporphyrin IX + Fe(2+). It participates in porphyrin-containing compound metabolism; protoheme biosynthesis; protoheme from protoporphyrin-IX: step 1/1. Its function is as follows. Catalyzes the ferrous insertion into protoporphyrin IX. This Rhizobium johnstonii (strain DSM 114642 / LMG 32736 / 3841) (Rhizobium leguminosarum bv. viciae) protein is Ferrochelatase.